Reading from the N-terminus, the 200-residue chain is Glycerol-3-phosphate acyltransferase (200 aa).

Transmembrane regions (helical) follow at residues 4–24, 70–90, 110–130, and 158–178; these read ALLA…YWVG, ALGS…FAVI, LGIL…VWLL, and QPLP…GAHR.

This sequence belongs to the PlsY family. Probably interacts with PlsX.

Its subcellular location is the cell inner membrane. The catalysed reaction is an acyl phosphate + sn-glycerol 3-phosphate = a 1-acyl-sn-glycero-3-phosphate + phosphate. It functions in the pathway lipid metabolism; phospholipid metabolism. Its function is as follows. Catalyzes the transfer of an acyl group from acyl-phosphate (acyl-PO(4)) to glycerol-3-phosphate (G3P) to form lysophosphatidic acid (LPA). This enzyme utilizes acyl-phosphate as fatty acyl donor, but not acyl-CoA or acyl-ACP. The chain is Glycerol-3-phosphate acyltransferase from Synechococcus sp. (strain JA-2-3B'a(2-13)) (Cyanobacteria bacterium Yellowstone B-Prime).